Consider the following 254-residue polypeptide: Attacin-A (254 aa).

An N-terminal signal peptide occupies residues 1 to 18 (MFTYKLILGLVLVVSASA). Residues 19-62 (RYLVFEDLEGESYLVPNQAEDEQVLEGEPFYENAVQLASPRVRR) constitute a propeptide that is removed on maturation.

It belongs to the attacin/sarcotoxin-2 family.

It localises to the secreted. In terms of biological role, hemolymph antibacterial protein. This Trichoplusia ni (Cabbage looper) protein is Attacin-A.